Reading from the N-terminus, the 177-residue chain is Adenine phosphoribosyltransferase (177 aa).

Belongs to the purine/pyrimidine phosphoribosyltransferase family. In terms of assembly, homodimer.

The protein localises to the cytoplasm. The catalysed reaction is AMP + diphosphate = 5-phospho-alpha-D-ribose 1-diphosphate + adenine. The protein operates within purine metabolism; AMP biosynthesis via salvage pathway; AMP from adenine: step 1/1. Its function is as follows. Catalyzes a salvage reaction resulting in the formation of AMP, that is energically less costly than de novo synthesis. The polypeptide is Adenine phosphoribosyltransferase (Chlorobaculum parvum (strain DSM 263 / NCIMB 8327) (Chlorobium vibrioforme subsp. thiosulfatophilum)).